The primary structure comprises 220 residues: Ribosomal RNA large subunit methyltransferase E (220 aa).

The S-adenosyl-L-methionine site is built by glycine 60, tryptophan 62, aspartate 92, aspartate 108, and aspartate 133. Residue lysine 173 is the Proton acceptor of the active site. The segment at alanine 195 to arginine 220 is disordered.

Belongs to the class I-like SAM-binding methyltransferase superfamily. RNA methyltransferase RlmE family.

It localises to the cytoplasm. It catalyses the reaction uridine(2552) in 23S rRNA + S-adenosyl-L-methionine = 2'-O-methyluridine(2552) in 23S rRNA + S-adenosyl-L-homocysteine + H(+). Specifically methylates the uridine in position 2552 of 23S rRNA at the 2'-O position of the ribose in the fully assembled 50S ribosomal subunit. This chain is Ribosomal RNA large subunit methyltransferase E, found in Burkholderia pseudomallei (strain 1710b).